The sequence spans 203 residues: Snake venom metalloproteinase fibrolase (203 aa).

Residue Gln-1 is modified to Pyrrolidone carboxylic acid. The region spanning 7-203 (RYVQLVIVAD…NNPQCILNKP (197 aa)) is the Peptidase M12B domain. Disulfide bonds link Cys-118–Cys-198, Cys-158–Cys-182, and Cys-160–Cys-165. Residue His-143 coordinates Zn(2+). The active site involves Glu-144. Zn(2+) is bound by residues His-147 and His-153.

The protein belongs to the venom metalloproteinase (M12B) family. P-I subfamily. In terms of assembly, monomer. Zn(2+) serves as cofactor. In terms of tissue distribution, expressed by the venom gland.

It is found in the secreted. The catalysed reaction is Hydrolysis of 14-Ala-|-Leu-15 in insulin B chain and 413-Lys-|-Leu-414 in alpha-chain of fibrinogen.. Is inhibited by EDTA, o-phenanthroline and tetraethylenepentamine. In terms of biological role, snake venom zinc metalloprotease that exhibits direct fibrinolytic activity. In Agkistrodon contortrix contortrix (Southern copperhead), this protein is Snake venom metalloproteinase fibrolase.